The following is an 862-amino-acid chain: Protein translocase subunit SecA (862 aa).

ATP is bound by residues glutamine 88, 106-110 (GEGKT), and aspartate 506. Cysteine 839, cysteine 841, cysteine 850, and histidine 851 together coordinate Zn(2+).

The protein belongs to the SecA family. In terms of assembly, monomer and homodimer. Part of the essential Sec protein translocation apparatus which comprises SecA, SecYEG and auxiliary proteins SecDF-YajC and YidC. Zn(2+) serves as cofactor.

It is found in the cell inner membrane. Its subcellular location is the cytoplasm. The catalysed reaction is ATP + H2O + cellular proteinSide 1 = ADP + phosphate + cellular proteinSide 2.. In terms of biological role, part of the Sec protein translocase complex. Interacts with the SecYEG preprotein conducting channel. Has a central role in coupling the hydrolysis of ATP to the transfer of proteins into and across the cell membrane, serving as an ATP-driven molecular motor driving the stepwise translocation of polypeptide chains across the membrane. This is Protein translocase subunit SecA from Campylobacter jejuni (strain RM1221).